A 123-amino-acid polypeptide reads, in one-letter code: RxLR effector protein Avh262 (123 aa).

The N-terminal stretch at 1–18 (MLPVAVVLVVFAVAVTSA) is a signal peptide. Residues 24–46 (VNPLPRRRRLKGTEEKGHHTNVN) are disordered. The RxLR-dEER motif lies at 30-50 (RRRLKGTEEKGHHTNVNDEER). A compositionally biased stretch (basic and acidic residues) spans 34-46 (KGTEEKGHHTNVN). Residues 60–82 (LISKLKVKINAKLLAGDSAKPAT) are biP-binding.

Belongs to the RxLR effector family. As to quaternary structure, interacts with host plant ER-luminal binding immunoglobulin proteins (BiPs) such as soybean BiP1, BiP2, BiP3 and BiP4.

Its subcellular location is the secreted. It is found in the host endoplasmic reticulum. In terms of biological role, effector that suppresses plant defense responses during the early stages of pathogen infection. Suppresses cell death induced by effectors and PAMPs in plant hosts. Avh262 stabilizes endoplasmic reticulum (ER)-luminal binding immunoglobulin proteins (BiPs), which act as negative regulators of plant resistance to Phytophthora. By stabilizing BiPs, Avh262 suppresses ER stress-triggered cell death and facilitates Phytophthora infection. The chain is RxLR effector protein Avh262 from Phytophthora sojae (Soybean stem and root rot agent).